A 446-amino-acid polypeptide reads, in one-letter code: Golgi reassembly-stacking protein 1 (446 aa).

The segment at 1–20 (MGLGASSEQPAGGEGFHLHG) is disordered. A lipid anchor (N-myristoyl glycine) is attached at glycine 2. 2 PDZ GRASP-type domains span residues 14–104 (EGFH…FCSF) and 110–198 (HVWH…YGYL). A GRASP region spans residues 14-214 (EGFHLHGVQE…PSSQHKKPPG (201 aa)). Histidine 17, histidine 19, and cysteine 102 together coordinate Zn(2+). The essential for interaction with GOLGA2/GM130 stretch occupies residues 189-201 (LGCGIGYGYLHRI). Disordered stretches follow at residues 202-252 (PTQP…LGSR) and 343-446 (VSGP…EPGL). 3 positions are modified to phosphothreonine: threonine 216, threonine 220, and threonine 224. The span at 343 to 354 (VSGPEDIGSSSS) shows a compositional bias: low complexity. Residues serine 365, serine 367, and serine 376 each carry the phosphoserine modification.

The protein belongs to the GORASP family. Homodimer. Forms higher-order oligomers under interphase but not mitotic conditions. Dimers of the protein on one membrane might be able to interact with dimers on another and so stack cisternae. Interacts with the C-terminus of GOLGA2/GM130 under both mitotic and non-mitotic conditions. The interaction is critical for the correct targeting of both proteins to the cis-Golgi. Interacts with TMED2 and TMED3. Phosphorylated by CDC2/B1 and PLK kinases during mitosis. Phosphorylation cycle correlates with the cisternal stacking cycle. Phosphorylation of the homodimer prevents the association of dimers into higher-order oligomers, leading to cisternal unstacking. Post-translationally, target for caspase-3 cleavage during apoptosis. The cleavage contributes to Golgi fragmentation and occurs very early in the execution phase of apoptosis. In terms of processing, myristoylated.

It localises to the golgi apparatus. The protein resides in the cis-Golgi network membrane. In terms of biological role, key structural protein of the Golgi apparatus. The membrane cisternae of the Golgi apparatus adhere to each other to form stacks, which are aligned side by side to form the Golgi ribbon. Acting in concert with GORASP2/GRASP55, is required for the formation and maintenance of the Golgi ribbon, and may be dispensable for the formation of stacks. However, other studies suggest that GORASP1 plays an important role in assembly and membrane stacking of the cisternae, and in the reassembly of Golgi stacks after breakdown during mitosis. Caspase-mediated cleavage of GORASP1 is required for fragmentation of the Golgi during apoptosis. Also mediates, via its interaction with GOLGA2/GM130, the docking of transport vesicles with the Golgi membranes. Mediates ER stress-induced unconventional (ER/Golgi-independent) trafficking of core-glycosylated CFTR to cell membrane. The polypeptide is Golgi reassembly-stacking protein 1 (Gorasp1) (Mus musculus (Mouse)).